Consider the following 225-residue polypeptide: uncharacterized protein (225 aa).

This is an uncharacterized protein from Methanocaldococcus jannaschii (strain ATCC 43067 / DSM 2661 / JAL-1 / JCM 10045 / NBRC 100440) (Methanococcus jannaschii).